The primary structure comprises 351 residues: Leukotriene B4 receptor 1 (351 aa).

Topologically, residues 1-21 (MAANTTSTAATSSPGGMSLSL) are extracellular. The N-linked (GlcNAc...) asparagine glycan is linked to Asn-4. Residues 22–44 (LPIVLLSVALVVGLPGNSFVVWS) traverse the membrane as a helical segment. The Cytoplasmic portion of the chain corresponds to 45-56 (ILKRMQKRSVTA). The helical transmembrane segment at 57-77 (LLVLNLALADLAVLLTAPFFL) threads the bilayer. At 78-93 (HFLARGTWSFEVTGCR) the chain is on the extracellular side. Residues 94-115 (LCHYVCGVSMYASVLLITIMSL) traverse the membrane as a helical segment. Over 116–140 (DRSLAVARPFVSQKVRTKAFARWVL) the chain is Cytoplasmic. The chain crosses the membrane as a helical span at residues 141–161 (AGIWVVSFLLAIPVLVYRTVT). The Extracellular segment spans residues 162 to 179 (PKNKTLICDSRYPSDGHK). Residue Asn-164 is glycosylated (N-linked (GlcNAc...) asparagine). The chain crosses the membrane as a helical span at residues 180–200 (VFHLLFEAITGFLLPFLAVVA). Topologically, residues 201–222 (SYSDIGRRLQARRFRRSRRTGR) are cytoplasmic. The helical transmembrane segment at 223-243 (LVVLIILAFAAFWLPYHLVNL) threads the bilayer. At 244–268 (VEAGRTLAGWDKNSPAGQRLKLARY) the chain is on the extracellular side. Residues 269 to 289 (VLIALAFLSSSVNPVLYACAG) traverse the membrane as a helical segment. Residues 290-351 (GGLLRSAGVG…TSSTPPESSK (62 aa)) lie on the Cytoplasmic side of the membrane. Polar residues-rich tracts occupy residues 311–327 (EVSS…TPKA) and 339–351 (SFMT…ESSK). Residues 311 to 351 (EVSSTRRGGTLVQTPKATPTCPEPGPTDSFMTSSTPPESSK) form a disordered region.

The protein belongs to the G-protein coupled receptor 1 family. Post-translationally, phosphorylated by GRK6 upon leukotriene B4 binding; which promotes desensitization. As to expression, exclusively expressed in polymorphonuclear leukocytes.

Its subcellular location is the cell membrane. Receptor for leukotriene B4, a potent chemoattractant involved in inflammation and immune response. The protein is Leukotriene B4 receptor 1 (Ltb4r) of Rattus norvegicus (Rat).